The primary structure comprises 283 residues: Probable replication-associated protein repA1 (283 aa).

Belongs to the IncFII RepA family.

Its function is as follows. This protein is essential for plasmid replication; it is involved in copy control functions. This is Probable replication-associated protein repA1 (repA1) from Buchnera aphidicola subsp. Schizaphis graminum (strain Sg).